Here is a 446-residue protein sequence, read N- to C-terminus: MSDRKYFGTDGIRGKVGDSPITPDFVLKLGWAAGKVLARHGSRKIIIGKDTRISGYMLESALEAGLAAAGLSASFTGPMPTPAVAYLTRTFRAEAGIVISASHNPFYDNGIKFFSIDGTKLPDDVEEAIEAEMEKPLTCVESAELGKANRIVDAAGRYIEFCKGTFPSELSLNELKIVVDCANGATYHIAPSVLRELGATVITIGCEPDGMNINEKCGATDVRLLQERVLAEKADVGLAFDGDGDRLMMVDHLGNKVDGDQILYIIAREGLRQGQLKGGAVGTLMSNMGLQLALKELGIPFVRAKVGDRYVLEAMQEKGWRIGAENSGHVILLDKTTTGDGIVAGLQVLTAMVRNHMTLHDLCSGMKLLPQILVNVRFSGDHNPLKSENVEEVTRQVEKELGDRGRVLLRKSGTEPLIRVMVEGDDAESVIAEMANRIADAVKAAG.

The active-site Phosphoserine intermediate is the Ser102. Residues Ser102, Asp241, Asp243, and Asp245 each coordinate Mg(2+). Position 102 is a phosphoserine (Ser102).

It belongs to the phosphohexose mutase family. Mg(2+) serves as cofactor. In terms of processing, activated by phosphorylation.

It catalyses the reaction alpha-D-glucosamine 1-phosphate = D-glucosamine 6-phosphate. Catalyzes the conversion of glucosamine-6-phosphate to glucosamine-1-phosphate. The sequence is that of Phosphoglucosamine mutase from Yersinia enterocolitica serotype O:8 / biotype 1B (strain NCTC 13174 / 8081).